Consider the following 162-residue polypeptide: Caveolin-2 (162 aa).

The Cytoplasmic portion of the chain corresponds to 1-86 (MGLETEKADV…FEISKYVLYK (86 aa)). Tyrosine 19 is modified (phosphotyrosine; by SRC). Serine 20 and serine 23 each carry phosphoserine. Positions 87-107 (FLTVFLAIPLAFAAGVLFAVL) form an intramembrane region, helical. Topologically, residues 108–162 (SCLHIWILMPFVKTCLMVLPSVQTIWRSVTDVVIAPLCASIGRSFSSVGLQLSHD) are cytoplasmic.

Belongs to the caveolin family. In terms of assembly, monomer or homodimer. Interacts with CAV1; the interaction forms a stable heterooligomeric complex that is required for targeting to lipid rafts and for caveolae formation. Tyrosine phosphorylated forms do not form heterooligomers with the Tyr-19-phosphorylated form existing as a monomer or dimer. Interacts (tyrosine phosphorylated form) with the SH2 domain-containing proteins, RASA1, NCK1 and SRC. Interacts (tyrosine phosphorylated form) with INSR. Interacts (Tyr-19 phosphorylated form) with MAPK1 (phosphorylated form); the interaction, promoted by insulin, leads to nuclear location and MAPK1 activation. Interacts with STAT3; the interaction is increased on insulin-induced tyrosine phosphorylation leading to STAT activation. In terms of processing, phosphorylated on serine and tyrosine residues. CAV1 promotes phosphorylation on Ser-23 which then targets the complex to the plasma membrane, lipid rafts and caveolae. Phosphorylation on Tyr-19 is required for insulin-induced phosphorylation of MAPK1 and DNA binding of STAT3. Tyrosine phosphorylation is induced by both EGF and insulin.

The protein resides in the nucleus. It localises to the cytoplasm. The protein localises to the golgi apparatus membrane. It is found in the cell membrane. Its subcellular location is the membrane. The protein resides in the caveola. Its function is as follows. May act as a scaffolding protein within caveolar membranes. Interacts directly with G-protein alpha subunits and can functionally regulate their activity. Acts as an accessory protein in conjunction with CAV1 in targeting to lipid rafts and driving caveolae formation. Positive regulator of cellular mitogenesis of the MAPK signaling pathway. Required for the insulin-stimulated nuclear translocation and activation of MAPK1 and STAT3, and the subsequent regulation of cell cycle progression. The chain is Caveolin-2 (CAV2) from Oryctolagus cuniculus (Rabbit).